A 297-amino-acid polypeptide reads, in one-letter code: Rhomboid-type serine protease 2 (297 aa).

6 consecutive transmembrane segments (helical) span residues 14-34 (IQHP…IFLL), 60-80 (ISFY…LVAL), 98-118 (IVLN…SIGF), 120-140 (PDEA…YWAI), 155-175 (LVVP…IVIP), and 179-199 (FIGH…YLDV). The active-site Nucleophile is serine 128. Residue histidine 182 is part of the active site. A disordered region spans residues 268–297 (DLEAGTRSRGNSSVDPTTSFPGTGQTLGTQ). The segment covering 275–297 (SRGNSSVDPTTSFPGTGQTLGTQ) has biased composition (polar residues).

Belongs to the peptidase S54 family.

The protein resides in the golgi apparatus membrane. Its subcellular location is the golgi apparatus. It localises to the cis-Golgi network membrane. The catalysed reaction is Cleaves type-1 transmembrane domains using a catalytic dyad composed of serine and histidine that are contributed by different transmembrane domains.. Its function is as follows. Probable rhomboid-type serine protease that catalyzes intramembrane proteolysis. This is Rhomboid-type serine protease 2 (RBD2) from Yarrowia lipolytica (strain CLIB 122 / E 150) (Yeast).